Here is a 475-residue protein sequence, read N- to C-terminus: MKSELIFLPAPAIGHLVGMVEMAKLFISRHENLSVTVLIAKFYMDTGVDNYNKSLLTNPTPRLTIVNLPETDPQNYMLKPRHAIFPSVIETQKTHVRDIISGMTQSESTQVVGLLADLLFINIMDIANEFNVPTYVYSPAGAGHLGLAFHLQTLNDKKQDVTEFRNSDTELLVPSFANPVPAEVLPSMYVDKEGGYDYLFSLFRRCRESKAIIINTFEELEPYAINSLRMDSMIPPIYPVGPILNLNGDGQNSDEAAVILGWLDDQPPSSVVFLCFGSYGSFQENQVKEIAMGLERSGHRFLWSLRPSIPKGETKLQLKYSNLKEILPVGFLDRTSCVGKVIGWAPQVAVLGHESVGGFLSHCGWNSTLESVWCGVPVATWPMYGEQQLNAFEMVKELGIAVEIEVDYKKDYFNMKNDFIVRAEEIETKIKKLMMDENNSEIRKKVKEMKEKSRAAMSENGSSYNSLAKLFEEIM.

H15 acts as the Proton acceptor in catalysis. H15 is an an anthocyanidin binding site. The Charge relay role is filled by D117. The UDP-alpha-D-glucose site is built by A345, Q347, H362, W365, N366, S367, and E370. G385 contributes to the an anthocyanidin binding site. Residues E386 and Q387 each contribute to the UDP-alpha-D-glucose site.

The protein belongs to the UDP-glycosyltransferase family. In terms of tissue distribution, mostly expressed in leaves and flowers, and, to a lower extent, in roots and stems.

The enzyme catalyses (20S)-protopanaxadiol + UDP-alpha-D-glucose = (20S)-ginsenoside C-K + UDP + H(+). It catalyses the reaction (20S)-ginsenoside Rg3 + UDP-alpha-D-glucose = (20S)-ginsenoside Rd + UDP + H(+). It carries out the reaction (20S)-ginsenoside Rh2 + UDP-alpha-D-glucose = (20S)-ginsenoside F2 + UDP + H(+). The catalysed reaction is (20S)-protopanaxatriol + UDP-alpha-D-glucose = (20S)-ginsenoside F1 + UDP + H(+). The enzyme catalyses dammarenediol-II + UDP-alpha-D-glucose = (20S)-20-O-(beta-D-glucosyl)-3-hydroxydammarene + UDP + H(+). It functions in the pathway secondary metabolite biosynthesis; terpenoid biosynthesis. Functionally, component of the dammarane-type triterpene saponins (e.g. ginsenosides or panaxosides) biosynthetic pathway. Glycosyltransferase that catalyzes the biosynthesis of ginsenoside F1 from protopanaxatriol (PPT). Triggers C20-OH glycosylation of ginsenoside Rg3 to produce ginsenoside Rd. Mediates the conversion of protopanaxadiol (PPD) to the ginsenoside compound K. catalyzes the production of 20S-O-beta-(D-glucosyl)-dammarenediol II form dammarenediol II (DM). This Panax ginseng (Korean ginseng) protein is UDP-glycosyltransferase 1.